The sequence spans 464 residues: Type I restriction enzyme EcoKI specificity subunit (464 aa).

It belongs to the type-I restriction system S methylase family. In terms of assembly, the type I restriction/modification system is composed of three polypeptides R, M and S. The restriction enzyme has stoichiometry R(2)M(2)S(1). The methyltransferase is composed of M(2)S(1). (Microbial infection) Interacts with Escherichia phage T7 protein Ocr; this interaction leads to the inhibition of the methyltransferase restriction enzyme M.EcoKI composed of M(2)S(1).

The specificity (S) subunit of a type I restriction enzyme; this subunit dictates DNA sequence specificity. The M and S subunits together form a methyltransferase (MTase) that methylates A-2 on the top and A-3 on the bottom strand of the sequence 5'-AACN(6)GTGC-3'. In the presence of the R subunit the complex can also act as an endonuclease, binding to the same target sequence but cutting the DNA some distance from this site. Whether the DNA is cut or modified depends on the methylation state of the target sequence. When the target site is unmodified, the DNA is cut. When the target site is hemimethylated, the complex acts as a maintenance MTase modifying the DNA so that both strands become methylated. After locating a non-methylated recognition site, the enzyme complex serves as a molecular motor that translocates DNA in an ATP-dependent manner until a collision occurs that triggers cleavage. This is Type I restriction enzyme EcoKI specificity subunit from Escherichia coli (strain K12).